The chain runs to 95 residues: Histone-like DNA-binding protein (95 aa).

This sequence belongs to the bacterial histone-like protein family.

In Rickettsia felis (strain ATCC VR-1525 / URRWXCal2) (Rickettsia azadi), this protein is Histone-like DNA-binding protein.